A 201-amino-acid chain; its full sequence is Peptide deformylase (201 aa).

A disordered region spans residues M1 to E24. The Fe cation site is built by C121 and H163. E164 is a catalytic residue. H167 lines the Fe cation pocket.

This sequence belongs to the polypeptide deformylase family. It depends on Fe(2+) as a cofactor.

It catalyses the reaction N-terminal N-formyl-L-methionyl-[peptide] + H2O = N-terminal L-methionyl-[peptide] + formate. In terms of biological role, removes the formyl group from the N-terminal Met of newly synthesized proteins. Requires at least a dipeptide for an efficient rate of reaction. N-terminal L-methionine is a prerequisite for activity but the enzyme has broad specificity at other positions. This is Peptide deformylase from Prochlorococcus marinus (strain MIT 9312).